Consider the following 503-residue polypeptide: MKLLEQIEKWAIETPDQTAFVWRDAKITYKQLKEDSDALAHWISSEYPDDRSPIMVYGHMQPEMIINFLGCVKAGHAYIPVDLSIPADRVQRIAENSGAKLLLSAAVTVTDLPVRIVSEDNLKDIFFTHKGNTPNPEHAVKGDENFYIIYTSGSTGNPKGVQITYNCLVSFTQWAVEDFNLQTGQVFLNQAPFSFDLSVMDIYPSLVTGGTLWAIDKDMIARPKDLFASLEQSDIQVWTSTPSFAEMCLMEASFSESMLPNMKTFLFCGEVLPNEVARKLIERFPKATIMNTYGPTEATVAVTGIHVTEEVLDQYKSLPVGYCKSDCRLLIMKEDGTIAPDGEKGEIVIVGPSVSVGYLGSPELTEKAFTMIDGERAYKTGDAGYVENGLLFYNGRLDFQIKLHGYRMELEEIEHHLRACSYVEGAVIVPIKKGEKYDYLLAVVVPGEHSFEKEFKLTSAIKKELNERLPNYMIPRKFMYQSSIPMTPNGKVDRKKLLSEVTA.

Residue 151-152 (TS) coordinates ATP. Aspartate 196 serves as a coordination point for D-alanine. Residue 291–296 (NTYGPT) participates in ATP binding. Valine 300 contributes to the D-alanine binding site. ATP contacts are provided by residues aspartate 382, 393-396 (YNGR), and lysine 491. Lysine 491 lines the D-alanine pocket.

This sequence belongs to the ATP-dependent AMP-binding enzyme family. DltA subfamily.

The protein resides in the cytoplasm. It catalyses the reaction holo-[D-alanyl-carrier protein] + D-alanine + ATP = D-alanyl-[D-alanyl-carrier protein] + AMP + diphosphate. The protein operates within cell wall biogenesis; lipoteichoic acid biosynthesis. Functionally, catalyzes the first step in the D-alanylation of lipoteichoic acid (LTA), the activation of D-alanine and its transfer onto the D-alanyl carrier protein (Dcp) DltC. In an ATP-dependent two-step reaction, forms a high energy D-alanyl-AMP intermediate, followed by transfer of the D-alanyl residue as a thiol ester to the phosphopantheinyl prosthetic group of the Dcp. D-alanylation of LTA plays an important role in modulating the properties of the cell wall in Gram-positive bacteria, influencing the net charge of the cell wall. This chain is D-alanine--D-alanyl carrier protein ligase, found in Bacillus anthracis (strain A0248).